A 296-amino-acid polypeptide reads, in one-letter code: 4-diphosphocytidyl-2-C-methyl-D-erythritol kinase (296 aa).

Residue K19 is part of the active site. ATP is bound at residue 102–112; it reads PMGAGLGGGSS. The active site involves D144.

This sequence belongs to the GHMP kinase family. IspE subfamily.

The catalysed reaction is 4-CDP-2-C-methyl-D-erythritol + ATP = 4-CDP-2-C-methyl-D-erythritol 2-phosphate + ADP + H(+). It participates in isoprenoid biosynthesis; isopentenyl diphosphate biosynthesis via DXP pathway; isopentenyl diphosphate from 1-deoxy-D-xylulose 5-phosphate: step 3/6. Catalyzes the phosphorylation of the position 2 hydroxy group of 4-diphosphocytidyl-2C-methyl-D-erythritol. This is 4-diphosphocytidyl-2-C-methyl-D-erythritol kinase from Burkholderia pseudomallei (strain 1710b).